Consider the following 526-residue polypeptide: Amine oxidase [flavin-containing] A (526 aa).

Met1 bears the N-acetylmethionine mark. Residues 1 to 497 (MTDLEKPSIT…HTFLERNLPS (497 aa)) lie on the Cytoplasmic side of the membrane. Residue Ser383 is modified to Phosphoserine. S-8alpha-FAD cysteine is present on Cys406. A helical; Anchor for type IV membrane protein membrane pass occupies residues 498-518 (VPGLLKITGFSTSVALLCFVL). The Mitochondrial intermembrane portion of the chain corresponds to 519 to 526 (YKFKQPQS). The interval 520 to 522 (KFK) is interaction with membrane phospholipid headgroups.

It belongs to the flavin monoamine oxidase family. As to quaternary structure, monomer, homo- or heterodimer (containing two subunits of similar size). Each subunit contains a covalently bound flavin. Enzymatically active as monomer. It depends on FAD as a cofactor.

Its subcellular location is the mitochondrion outer membrane. It carries out the reaction a secondary aliphatic amine + O2 + H2O = a primary amine + an aldehyde + H2O2. The catalysed reaction is a primary methyl amine + O2 + H2O = an aldehyde + H2O2 + NH4(+). The enzyme catalyses serotonin + O2 + H2O = (5-hydroxyindol-3-yl)acetaldehyde + H2O2 + NH4(+). It catalyses the reaction (R)-adrenaline + O2 + H2O = (R)-3,4-dihydroxymandelaldehyde + methylamine + H2O2. It carries out the reaction dopamine + O2 + H2O = 3,4-dihydroxyphenylacetaldehyde + H2O2 + NH4(+). The catalysed reaction is tyramine + O2 + H2O = (4-hydroxyphenyl)acetaldehyde + H2O2 + NH4(+). The enzyme catalyses (R)-noradrenaline + O2 + H2O = (R)-3,4-dihydroxymandelaldehyde + H2O2 + NH4(+). It catalyses the reaction kynuramine + O2 + H2O = 3-(2-aminophenyl)-3-oxopropanal + H2O2 + NH4(+). It carries out the reaction tryptamine + O2 + H2O = indole-3-acetaldehyde + H2O2 + NH4(+). The catalysed reaction is 2-phenylethylamine + O2 + H2O = 2-phenylacetaldehyde + H2O2 + NH4(+). Catalyzes the oxidative deamination of biogenic and xenobiotic amines and has important functions in the metabolism of neuroactive and vasoactive amines in the central nervous system and peripheral tissues. Preferentially oxidizes serotonin. Also catalyzes the oxidative deamination of kynuramine to 3-(2-aminophenyl)-3-oxopropanal that can spontaneously condense to 4-hydroxyquinoline. This is Amine oxidase [flavin-containing] A from Mus musculus (Mouse).